The chain runs to 404 residues: S-adenosylmethionine synthase (404 aa).

Over residues 1–13 (MSHSRYFFTSESV) the composition is skewed to polar residues. Residues 1–20 (MSHSRYFFTSESVSEGHPDK) are disordered. Position 17 (His-17) interacts with ATP. Residue Asp-19 participates in Mg(2+) binding. Position 45 (Glu-45) interacts with K(+). L-methionine contacts are provided by Glu-58 and Gln-101. Positions 101 to 111 (QSPDINRGVDR) are flexible loop. ATP-binding positions include 172–174 (DSK), 246–247 (RF), Asp-255, 261–262 (RK), Ala-278, and Lys-282. Asp-255 is an L-methionine binding site. L-methionine is bound at residue Lys-286.

The protein belongs to the AdoMet synthase family. In terms of assembly, homotetramer; dimer of dimers. Requires Mg(2+) as cofactor. K(+) serves as cofactor.

The protein localises to the cytoplasm. It carries out the reaction L-methionine + ATP + H2O = S-adenosyl-L-methionine + phosphate + diphosphate. Its pathway is amino-acid biosynthesis; S-adenosyl-L-methionine biosynthesis; S-adenosyl-L-methionine from L-methionine: step 1/1. Its function is as follows. Catalyzes the formation of S-adenosylmethionine (AdoMet) from methionine and ATP. The overall synthetic reaction is composed of two sequential steps, AdoMet formation and the subsequent tripolyphosphate hydrolysis which occurs prior to release of AdoMet from the enzyme. The protein is S-adenosylmethionine synthase of Chlorobaculum parvum (strain DSM 263 / NCIMB 8327) (Chlorobium vibrioforme subsp. thiosulfatophilum).